A 654-amino-acid chain; its full sequence is MSLAAYCVICCRRMGTSTPPPKSSTYWRDIRNIIKFTGSLILGGSLFITYEVLALKKSLTLDTQVIEREKMKSYIYVHTVSLDKTENHGITYQARKELHKAVRKVLATSARIFRGPFADTFSTVDIEDHDCAVWLLLRKSRSDDRAARLQAVQEMSEARHWHDYQYRIIAQACDMRTLTGLARSKDSDLRFFLRPPPLPSLKEDSSTEEELRHLLASLPQTDLDECIQCFTALALSESSQSLAAQKGGLWCFGGNGLPYAESFGEVPSATVEMFCLEALVKHSEIPTHCDKIEANGGLQLLQRLYQLHKDCPKVQRNIMRILGNMALNEHLHSTIVRSGWVSILAEAIKSQHIMEASHAARTLANLDRETVPDKYHDGVYVLHPQYRTSQPIKADVLFIHGLMGAAFKTWRQQDNDQDLTEKVSEDETKYTTCWPKSWLARDCPALRIISVEYDTSLSDWRARCPTERKSIAFRSNELLRKLRAAGVGDRPVVWVSHSMGGLLVKKMLLEASKRPEMNTIINNTRGIIFYSVPHHGSHLAEYSVNIRYLLFPSLEVKELSKDSPALKTLQDDFLEFAKDKNFQVLSFVETLPTYIGSMIKLHVVPLDSADLGLGDLIPVDVNHLNICKPKKKDAFLYQRTLQFIRDALAKDLEN.

A helical membrane pass occupies residues 32 to 54; that stretch reads NIIKFTGSLILGGSLFITYEVLA.

Belongs to the SERAC1 family.

Its subcellular location is the mitochondrion membrane. The protein resides in the endoplasmic reticulum. The protein localises to the mitochondrion. Facilitates the transport of serine from the cytosol to the mitochondria by interacting with and stabilizing Sideroflexin-1 (SFXN1), a mitochondrial serine transporter, playing a fundamental role in the one-carbon cycle responsible for the synthesis of nucleotides needed for mitochondrial DNA replication. Plays an important role in the phosphatidylglycerol (PG) remodeling that is essential for both mitochondrial function and intracellular cholesterol trafficking. Specifically involved in the exchange of the sn-1 acyl chain from PG 16:0/18:1(9Z) (also known as 1-hexadecanoyl-2-(9Z-octadecenoyl)-sn-glycero-3-phospho-(1'-sn-glycerol)) to PG 18:0/18:1(9Z) (also known as 1-octadecanoyl-2-(9Z-octadecenoyl)-sn-glycero-3-phospho-(1'-sn-glycerol)), a step needed in the bis(monoacylglycerol)phosphate biosynthetic pathway. May have acyltransferase activity although the mechanism for PG remodeling has not been determined. The chain is Protein SERAC1 (SERAC1) from Bos taurus (Bovine).